We begin with the raw amino-acid sequence, 717 residues long: Choline transporter-like protein 5 (717 aa).

The disordered stretch occupies residues methionine 1–aspartate 24. Residues methionine 1–aspartate 38 are Cytoplasmic-facing. The helical transmembrane segment at valine 39–alanine 59 threads the bilayer. Over tryptophan 60 to tryptophan 242 the chain is Extracellular. 2 N-linked (GlcNAc...) asparagine glycosylation sites follow: asparagine 88 and asparagine 190. The helical transmembrane segment at tyrosine 243–leucine 263 threads the bilayer. Residues arginine 264–phenylalanine 265 are Cytoplasmic-facing. Residues isoleucine 266 to isoleucine 286 traverse the membrane as a helical segment. Residues tryptophan 287–tryptophan 325 lie on the Extracellular side of the membrane. Residue asparagine 314 is glycosylated (N-linked (GlcNAc...) asparagine). A helical transmembrane segment spans residues phenylalanine 326–leucine 346. Topologically, residues arginine 347–arginine 351 are cytoplasmic. Residues valine 352–valine 372 form a helical membrane-spanning segment. Over tyrosine 373–proline 374 the chain is Extracellular. Residues alanine 375–leucine 395 traverse the membrane as a helical segment. Over alanine 396–asparagine 460 the chain is Cytoplasmic. A helical membrane pass occupies residues leucine 461 to glycine 481. Topologically, residues alanine 482–serine 515 are extracellular. A helical membrane pass occupies residues leucine 516–leucine 536. At asparagine 537–tyrosine 610 the chain is on the cytoplasmic side. Residues phenylalanine 611 to phenylalanine 631 traverse the membrane as a helical segment. At phenylalanine 632–tyrosine 649 the chain is on the extracellular side. A helical membrane pass occupies residues tryptophan 650–valine 670. The Cytoplasmic segment spans residues tyrosine 671–glutamine 717.

It belongs to the CTL (choline transporter-like) family.

Its subcellular location is the cell membrane. The enzyme catalyses choline(out) + n H(+)(in) = choline(in) + n H(+)(out). Functionally, choline/H+ antiporter. This chain is Choline transporter-like protein 5 (SLC44A5), found in Macaca fascicularis (Crab-eating macaque).